The sequence spans 218 residues: Ohanin-like protein (218 aa).

Residues 1-40 form the signal peptide; it reads MSPSAGFQFSLYFLQTKKVLWKLTGLCYILLFTLCFFADQ. The propeptide occupies 41-48; sequence ENGGKALA. In terms of domain architecture, B30.2/SPRY spans 49–155; sequence SPPGIWKRAD…RIWQTGLWWL (107 aa). The propeptide occupies 156–218; sequence RHLETDPGRV…LGGTVSLTTL (63 aa).

This sequence belongs to the ohanin/vespryn family. In terms of tissue distribution, expressed by the venom gland.

The protein localises to the secreted. Neurotoxin that produces dose-dependent hypolocomotion and hyperalgesia in mice. May directly act on the central nervous system, as it is 6500-fold more potent when administered intracerebroventricularly than intraperitoneal. In Lachesis muta muta (Bushmaster), this protein is Ohanin-like protein.